Here is a 320-residue protein sequence, read N- to C-terminus: Cytochrome f (320 aa).

The signal sequence occupies residues 1-35 (MENRNTFSWVKEQITRSISVSIMIYVITRTSISNA). Positions 36, 56, 59, and 60 each coordinate heme. Residues 286 to 306 (VQGLLFFFASVILAQVFLVLK) form a helical membrane-spanning segment.

It belongs to the cytochrome f family. The 4 large subunits of the cytochrome b6-f complex are cytochrome b6, subunit IV (17 kDa polypeptide, petD), cytochrome f and the Rieske protein, while the 4 small subunits are PetG, PetL, PetM and PetN. The complex functions as a dimer. It depends on heme as a cofactor.

It is found in the plastid. Its subcellular location is the chloroplast thylakoid membrane. Component of the cytochrome b6-f complex, which mediates electron transfer between photosystem II (PSII) and photosystem I (PSI), cyclic electron flow around PSI, and state transitions. This Hordeum vulgare (Barley) protein is Cytochrome f.